The sequence spans 444 residues: Na(+)/H(+) antiporter NhaA 2 (444 aa).

11 helical membrane passes run 21–41 (FSGIFLFFCAVSAMIVANSPF), 64–84 (FSIHDWINDVLMSIFFLMVGL), 102–122 (AFPVIGAVGGMIVPGVIYYVL), 131–151 (GFGIPMATDIAFALGVILLLG), 160–180 (VFLVTLAVADDLGAIVVIAVF), 185–205 (EGLHFIYLGVAAGLLILLTGI), 212–232 (HLGVYIGIGILLWFCVHHSGI), 307–327 (ALQPLCAFIIMPLFAFANAGV), 342–362 (LGVILGLVVGKPLGILSLTFL), 377–397 (WSHIFGAGMLAGIGFTMSMFV), and 413–433 (IAILLASSIAGIVGSLYLIIN).

Belongs to the NhaA Na(+)/H(+) (TC 2.A.33) antiporter family.

It is found in the cell inner membrane. The catalysed reaction is Na(+)(in) + 2 H(+)(out) = Na(+)(out) + 2 H(+)(in). Na(+)/H(+) antiporter that extrudes sodium in exchange for external protons. The polypeptide is Na(+)/H(+) antiporter NhaA 2 (Helicobacter hepaticus (strain ATCC 51449 / 3B1)).